Here is a 342-residue protein sequence, read N- to C-terminus: Dihydroorotase (342 aa).

H13 and H15 together coordinate Zn(2+). Residues 15-17 (HLR) and N41 contribute to the substrate site. K98, H135, and H173 together coordinate Zn(2+). Residue K98 is modified to N6-carboxylysine. A substrate-binding site is contributed by H135. L218 contacts substrate. Position 246 (D246) interacts with Zn(2+). D246 is an active-site residue. Substrate is bound by residues H250 and A262.

It belongs to the metallo-dependent hydrolases superfamily. DHOase family. Class II DHOase subfamily. In terms of assembly, homodimer. Requires Zn(2+) as cofactor.

It carries out the reaction (S)-dihydroorotate + H2O = N-carbamoyl-L-aspartate + H(+). Its pathway is pyrimidine metabolism; UMP biosynthesis via de novo pathway; (S)-dihydroorotate from bicarbonate: step 3/3. Functionally, catalyzes the reversible cyclization of carbamoyl aspartate to dihydroorotate. This Vibrio atlanticus (strain LGP32) (Vibrio splendidus (strain Mel32)) protein is Dihydroorotase.